Here is a 193-residue protein sequence, read N- to C-terminus: Probable gluconokinase (193 aa).

Residue 18-25 (GTAGTGKS) participates in ATP binding.

This sequence belongs to the gluconokinase GntK/GntV family.

It localises to the cytoplasm. It carries out the reaction D-gluconate + ATP = 6-phospho-D-gluconate + ADP + H(+). It participates in carbohydrate acid metabolism; D-gluconate degradation. The sequence is that of Probable gluconokinase from Saccharomyces cerevisiae (strain ATCC 204508 / S288c) (Baker's yeast).